The sequence spans 207 residues: Uracil phosphoribosyltransferase (207 aa).

5-phospho-alpha-D-ribose 1-diphosphate-binding positions include R77, R102, and 129-137 (DPMLATGGS). Residues I192 and 197–199 (GDA) contribute to the uracil site. D198 is a 5-phospho-alpha-D-ribose 1-diphosphate binding site.

Belongs to the UPRTase family. Mg(2+) is required as a cofactor.

It carries out the reaction UMP + diphosphate = 5-phospho-alpha-D-ribose 1-diphosphate + uracil. It participates in pyrimidine metabolism; UMP biosynthesis via salvage pathway; UMP from uracil: step 1/1. With respect to regulation, allosterically activated by GTP. Catalyzes the conversion of uracil and 5-phospho-alpha-D-ribose 1-diphosphate (PRPP) to UMP and diphosphate. In Ureaplasma urealyticum serovar 10 (strain ATCC 33699 / Western), this protein is Uracil phosphoribosyltransferase.